We begin with the raw amino-acid sequence, 296 residues long: MSDENIRQIAFYGKGGIGKSTTSQNTIAALAEMGERIMIVGCDPKADSTRLMLHSKAQTTILHLAAERGAVEDLELEEVLLTGYRDVKCVESGGPEPGVGCAGRGIITAINFLEENGAYEDLDFVSYDVLGDVVCGGFAMPIREGKAQEIYIVTSGEMMAMYAANNIARGILKYAHSGGVRLGGLICNSRKVDREIELIETLAQRLNTQMIHFVPRDNIVQHAELRRMTVNEYAPDSAQAQEYATLARKIKDNTNLTIPTPISMDELEDLLVEFGLLGGDEEYEKAIKQDLAKRGA.

An ATP-binding site is contributed by 13-20 (GKGGIGKS). Position 101 (Cys-101) interacts with [4Fe-4S] cluster. Position 104 is an ADP-ribosylarginine; by dinitrogenase reductase ADP-ribosyltransferase (Arg-104). Residue Cys-135 participates in [4Fe-4S] cluster binding.

The protein belongs to the NifH/BchL/ChlL family. In terms of assembly, homodimer. [4Fe-4S] cluster is required as a cofactor. Post-translationally, the reversible ADP-ribosylation of Arg-104 inactivates the nitrogenase reductase and regulates nitrogenase activity.

The catalysed reaction is N2 + 8 reduced [2Fe-2S]-[ferredoxin] + 16 ATP + 16 H2O = H2 + 8 oxidized [2Fe-2S]-[ferredoxin] + 2 NH4(+) + 16 ADP + 16 phosphate + 6 H(+). The key enzymatic reactions in nitrogen fixation are catalyzed by the nitrogenase complex, which has 2 components: the iron protein and the molybdenum-iron protein. The protein is Nitrogenase iron protein (nifH) of Leptolyngbya boryana (Plectonema boryanum).